Reading from the N-terminus, the 264-residue chain is Homeobox protein vent1 (264 aa).

Basic and acidic residues-rich tracts occupy residues 16-26 (KEEATDGKDSM) and 44-59 (YAKEMPRKKDGQDVQE). A disordered region spans residues 16-140 (KEEATDGKDS…RLRTAFTPQQ (125 aa)). Residues 60 to 80 (HTTSFQCSLGEQVINRPSANP) show a composition bias toward polar residues. The span at 117-130 (TEQREKSPKSDLQR) shows a compositional bias: basic and acidic residues. A DNA-binding region (homeobox) is located at residues 129 to 188 (QRRLRTAFTPQQISKLEQAFNKQRYLGAPERKKLATSLQLSEIQVKTWFQNRRMKLKRQI).

Expressed in the ventral marginal zone of gastrulae. At stage 11.5, also expressed in the ventral region of the animal cap (ectoderm). At the end of gastrulation, predominantly localized to the ventral and lateral regions of the closing slit blastopore. At early tail bud stage, expression is maintained only in the forming proctodeum.

It is found in the nucleus. Its function is as follows. Transcriptional repressor. Cooperates with vent2 in a ventral signaling pathway downstream of bmp4, which antagonizes the Spemann organizer and dorsal mesoderm formation, and leads to ventral mesoderm formation. Acts downstream of bmp4 to repress transcription of foxa4-B/XFD-1'. Binds to DNA with preference for the target sequence 5'-CTATT[T/C]G-3'. Also binds 5'-TGCATTTTG-3' at a lower frequency, and occasionally 5'-TTGATC-3'. Binds to the homeobox 2 (HBX2) repressor element in the promoter of the myf5 gene and represses myf5 transcription in the ventral domain. This Xenopus laevis (African clawed frog) protein is Homeobox protein vent1 (vent1).